The chain runs to 140 residues: Phosphoribosyl-AMP cyclohydrolase (140 aa).

Aspartate 84 serves as a coordination point for Mg(2+). A Zn(2+)-binding site is contributed by cysteine 85. The Mg(2+) site is built by aspartate 86 and aspartate 88. Cysteine 101 and cysteine 108 together coordinate Zn(2+).

The protein belongs to the PRA-CH family. As to quaternary structure, homodimer. The cofactor is Mg(2+). Zn(2+) is required as a cofactor.

It localises to the cytoplasm. The enzyme catalyses 1-(5-phospho-beta-D-ribosyl)-5'-AMP + H2O = 1-(5-phospho-beta-D-ribosyl)-5-[(5-phospho-beta-D-ribosylamino)methylideneamino]imidazole-4-carboxamide. Its pathway is amino-acid biosynthesis; L-histidine biosynthesis; L-histidine from 5-phospho-alpha-D-ribose 1-diphosphate: step 3/9. Catalyzes the hydrolysis of the adenine ring of phosphoribosyl-AMP. This is Phosphoribosyl-AMP cyclohydrolase from Chloroherpeton thalassium (strain ATCC 35110 / GB-78).